A 283-amino-acid chain; its full sequence is Probable cytochrome c oxidase subunit 3 (283 aa).

The next 6 membrane-spanning stretches (helical) occupy residues 26 to 46, 51 to 71, 94 to 114, 179 to 199, 217 to 237, and 261 to 281; these read PWPVLTSFALLLLVIGGVSFM, FNIYILSAGIISVGYCLYSWW, IGMALFILTEIVFFGVFFASF, CVTALALTILLGIFFTTMQAY, FYLATGFHGAHVIIGTIFLII, and AWYWHFVDVVWLFLFTFVYIF.

It belongs to the cytochrome c oxidase subunit 3 family.

Its subcellular location is the cell membrane. The enzyme catalyses 4 Fe(II)-[cytochrome c] + O2 + 8 H(+)(in) = 4 Fe(III)-[cytochrome c] + 2 H2O + 4 H(+)(out). In Rickettsia conorii (strain ATCC VR-613 / Malish 7), this protein is Probable cytochrome c oxidase subunit 3 (ctaE).